We begin with the raw amino-acid sequence, 112 residues long: T cell receptor alpha variable 9-2 (112 aa).

An N-terminal signal peptide occupies residues 1 to 20 (MNYSPGLVSLILLLLGRTRG). An Ig-like domain is found at 21–112 (DSVTQMEGPV…DSAVYFCALS (92 aa)). Asparagine 41 carries an N-linked (GlcNAc...) asparagine glycan. A disulfide bridge connects residues cysteine 42 and cysteine 109.

As to quaternary structure, alpha-beta TR is a heterodimer composed of an alpha and beta chain; disulfide-linked. The alpha-beta TR is associated with the transmembrane signaling CD3 coreceptor proteins to form the TR-CD3 (TcR or TCR). The assembly of alpha-beta TR heterodimers with CD3 occurs in the endoplasmic reticulum where a single alpha-beta TR heterodimer associates with one CD3D-CD3E heterodimer, one CD3G-CD3E heterodimer and one CD247 homodimer forming a stable octameric structure. CD3D-CD3E and CD3G-CD3E heterodimers preferentially associate with TR alpha and TR beta chains, respectively. The association of the CD247 homodimer is the last step of TcR assembly in the endoplasmic reticulum and is required for transport to the cell surface.

The protein localises to the cell membrane. In terms of biological role, v region of the variable domain of T cell receptor (TR) alpha chain that participates in the antigen recognition. Alpha-beta T cell receptors are antigen specific receptors which are essential to the immune response and are present on the cell surface of T lymphocytes. Recognize peptide-major histocompatibility (MH) (pMH) complexes that are displayed by antigen presenting cells (APC), a prerequisite for efficient T cell adaptive immunity against pathogens. Binding of alpha-beta TR to pMH complex initiates TR-CD3 clustering on the cell surface and intracellular activation of LCK that phosphorylates the ITAM motifs of CD3G, CD3D, CD3E and CD247 enabling the recruitment of ZAP70. In turn ZAP70 phosphorylates LAT, which recruits numerous signaling molecules to form the LAT signalosome. The LAT signalosome propagates signal branching to three major signaling pathways, the calcium, the mitogen-activated protein kinase (MAPK) kinase and the nuclear factor NF-kappa-B (NF-kB) pathways, leading to the mobilization of transcription factors that are critical for gene expression and essential for T cell growth and differentiation. The T cell repertoire is generated in the thymus, by V-(D)-J rearrangement. This repertoire is then shaped by intrathymic selection events to generate a peripheral T cell pool of self-MH restricted, non-autoaggressive T cells. Post-thymic interaction of alpha-beta TR with the pMH complexes shapes TR structural and functional avidity. This chain is T cell receptor alpha variable 9-2, found in Homo sapiens (Human).